The sequence spans 279 residues: DegV domain-containing protein SACOL1460 (279 aa).

The DegV domain maps to 4–278 (QIIVTDSTSD…QGAIGLVVLK (275 aa)). Residues T61 and S93 each coordinate hexadecanoate.

In terms of biological role, may bind long-chain fatty acids, such as palmitate, and may play a role in lipid transport or fatty acid metabolism. In Staphylococcus aureus (strain COL), this protein is DegV domain-containing protein SACOL1460.